Consider the following 92-residue polypeptide: Small ribosomal subunit protein uS19 (92 aa).

The protein belongs to the universal ribosomal protein uS19 family.

Protein S19 forms a complex with S13 that binds strongly to the 16S ribosomal RNA. This is Small ribosomal subunit protein uS19 from Methylobacterium sp. (strain 4-46).